Consider the following 184-residue polypeptide: uncharacterized protein (184 aa).

Residues 5–27 form a helical membrane-spanning segment; that stretch reads YLLATAMFLIVCVYVISETVNLH.

It is found in the membrane. This is an uncharacterized protein from Methanocaldococcus jannaschii (strain ATCC 43067 / DSM 2661 / JAL-1 / JCM 10045 / NBRC 100440) (Methanococcus jannaschii).